Consider the following 144-residue polypeptide: Large ribosomal subunit protein uL13 (144 aa).

It belongs to the universal ribosomal protein uL13 family. In terms of assembly, part of the 50S ribosomal subunit.

In terms of biological role, this protein is one of the early assembly proteins of the 50S ribosomal subunit, although it is not seen to bind rRNA by itself. It is important during the early stages of 50S assembly. The chain is Large ribosomal subunit protein uL13 from Clostridium kluyveri (strain NBRC 12016).